Here is a 426-residue protein sequence, read N- to C-terminus: Endothelin-1 receptor (426 aa).

Positions 1 to 20 (METFCLKVTFWVALVGYVIG) are cleaved as a signal peptide. Residues 21–79 (DHPESYSTNLSTPVDFTTFHGTELSFLVTTHRPTNLALPSNGSMHSYCPQQTKITSAFK) are Extracellular-facing. Residues N29 and N61 are each glycosylated (N-linked (GlcNAc...) asparagine). Residues 80-101 (YINTVISCTIFIVGMVGNATLL) traverse the membrane as a helical segment. Over 102-111 (RIIYQNKCMR) the chain is Cytoplasmic. The chain crosses the membrane as a helical span at residues 112–131 (NGPNALIASLALGDLIYVVI). Residues 132–158 (DLPINVFKLLAGRWPFDHNDFGVFLCK) lie on the Extracellular side of the membrane. A disulfide bridge connects residues C157 and C238. Residues 159 to 180 (LFPFLQKSSVGITVLNLCALSV) traverse the membrane as a helical segment. Residues 181–204 (DRYRAVASWSRVQGIGIPLITAIE) are Cytoplasmic-facing. Residues 205-228 (IVSIWILSFILAIPEAIGFVMVPF) form a helical membrane-spanning segment. The Extracellular portion of the chain corresponds to 229–255 (EYKGEQHKTCMLNATSKFMEFYQDVKD). N-linked (GlcNAc...) asparagine glycosylation occurs at N241. A helical transmembrane segment spans residues 256 to 277 (WWLFGFYFCMPLVCTAIFYTLM). Residues 278-305 (TCEMLNRRNGSLRIALSEHLKQRREVAK) lie on the Cytoplasmic side of the membrane. Residues 306–327 (TVFCLVVIFALCWFPLHLSRIL) form a helical membrane-spanning segment. The Extracellular portion of the chain corresponds to 328–346 (KKTVYDEMDKNRCELLSFL). The chain crosses the membrane as a helical span at residues 347-371 (RLMDYIGINLATMNSCINPIALYFV). Residues 372–426 (SKKFKNCFQSCLCCCCYQSKSLMTSVPMNGTSIQWKNHEQNNHNTERSSHKDSIN) lie on the Cytoplasmic side of the membrane. Phosphoserine is present on S424.

It belongs to the G-protein coupled receptor 1 family. Endothelin receptor subfamily. EDNRA sub-subfamily. Interacts with HDAC7 and KAT5.

The protein resides in the cell membrane. Functionally, receptor for endothelin-1. Mediates its action by association with G proteins that activate a phosphatidylinositol-calcium second messenger system. The rank order of binding affinities for ET-A is: ET1 &gt; ET2 &gt;&gt; ET3. This Canis lupus familiaris (Dog) protein is Endothelin-1 receptor.